The chain runs to 432 residues: N-acylneuraminate cytidylyltransferase (432 aa).

Residue methionine 1 is modified to N-acetylmethionine. The tract at residues 1 to 38 (MDALEKGAATSGPAPRGRPSRGRPPKLQRSRGAGRGLE) is disordered. The BC1 motif signature appears at 15-31 (PRGRPSRGRPPKLQRSR). Basic residues predominate over residues 18–29 (RPSRGRPPKLQR). Omega-N-methylarginine is present on residues arginine 35 and arginine 50. Substrate is bound by residues arginine 50, asparagine 60, arginine 109, serine 118, serine 120, and glutamine 141. Residues 198–204 (KRPRRQD) carry the BC2 motif motif. Arginine 199 is a catalytic residue. Positions 267 to 274 (KEKLKEIK) match the BC3 motif motif.

The protein belongs to the CMP-NeuNAc synthase family. As to quaternary structure, homotetramer; the active enzyme is formed by a dimer of dimers. Liver.

It is found in the nucleus. It catalyses the reaction an N-acylneuraminate + CTP = a CMP-N-acyl-beta-neuraminate + diphosphate. Its pathway is amino-sugar metabolism; N-acetylneuraminate metabolism. Its function is as follows. Catalyzes the activation of N-acetylneuraminic acid (NeuNAc) to cytidine 5'-monophosphate N-acetylneuraminic acid (CMP-NeuNAc), a substrate required for the addition of sialic acid. Has some activity toward NeuNAc, N-glycolylneuraminic acid (Neu5Gc) or 2-keto-3-deoxy-D-glycero-D-galacto-nononic acid (KDN). The polypeptide is N-acylneuraminate cytidylyltransferase (Cmas) (Rattus norvegicus (Rat)).